The following is a 227-amino-acid chain: Uracil-DNA glycosylase (227 aa).

Residue D68 is the Proton acceptor of the active site.

It belongs to the uracil-DNA glycosylase (UDG) superfamily. UNG family.

Its subcellular location is the cytoplasm. It catalyses the reaction Hydrolyzes single-stranded DNA or mismatched double-stranded DNA and polynucleotides, releasing free uracil.. Its function is as follows. Excises uracil residues from the DNA which can arise as a result of misincorporation of dUMP residues by DNA polymerase or due to deamination of cytosine. The chain is Uracil-DNA glycosylase from Mycobacterium leprae (strain Br4923).